A 278-amino-acid chain; its full sequence is NAD kinase (278 aa).

The active-site Proton acceptor is the D56. Residues 56 to 57 (DG), 132 to 133 (NE), R158, D160, and 171 to 176 (TAYNKS) contribute to the NAD(+) site.

Belongs to the NAD kinase family. A divalent metal cation serves as cofactor.

The protein localises to the cytoplasm. It carries out the reaction NAD(+) + ATP = ADP + NADP(+) + H(+). In terms of biological role, involved in the regulation of the intracellular balance of NAD and NADP, and is a key enzyme in the biosynthesis of NADP. Catalyzes specifically the phosphorylation on 2'-hydroxyl of the adenosine moiety of NAD to yield NADP. This is NAD kinase from Streptococcus pyogenes serotype M1.